A 498-amino-acid chain; its full sequence is MASQGTKRSYEQMETGGERQNATEIRASVGRMVGGIGRFYIQMCTELKLSDYEGRLIQNSITIERMVLSAFDERRNKYLEEHPSAGKDPKKTGGPIYRRRDGKWIRELILYDKEEIRRIWRQANNGEDATAGLTHLMIWHSNLNDATYQRTRALVRTGMDPRMCSLMQGSTLPRRSGAAGAAVKGVGTMVMELIRMIKRGINDRNFWRGENGRLTRIAYERMCNILKGKFQTAAQRAMMDQVRESRNPGNAEIEDLIFLARSALILRGSVAHKSCLPACVYGLAVASGYDFEREGYSLVGIDPFRLLQNSQVFSLVRPNENPAHKSQLVWMACHSAAFEDLRVSSFIRGTRVVPRGQLSTRGVQIASNENMETMDSSTLELRSRYWAIRTRSGGNTNQQRASAGQISVQPTFSVQRNLPFERATIMAAFTGNTEGRTSDMRTEIIRMMENARPEDVSFQGRGVFELSDEKATNPIVPSFDMSNEGSYFFGDNAEEYDN.

Residues 1-18 (MASQGTKRSYEQMETGGE) carry the Unconventional nuclear localization signal motif. The tract at residues 1-21 (MASQGTKRSYEQMETGGERQN) is disordered. The Bipartite nuclear localization signal signature appears at 198-216 (KRGINDRNFWRGENGRLTR).

This sequence belongs to the influenza viruses nucleoprotein family. As to quaternary structure, homomultimerizes to form the nucleocapsid. May bind host exportin-1/XPO1. Binds to viral genomic RNA. Protein-RNA contacts are mediated by a combination of electrostatic interactions between positively charged residues and the phosphate backbone and planar interactions between aromatic side chains and bases. In terms of processing, late in virus-infected cells, may be cleaved from a 56-kDa protein to a 53-kDa protein by a cellular caspase. This cleavage might be a marker for the onset of apoptosis in infected cells or have a specific function in virus host interaction.

Its subcellular location is the virion. The protein resides in the host nucleus. Functionally, encapsidates the negative strand viral RNA, protecting it from nucleases. The encapsidated genomic RNA is termed the ribonucleoprotein (RNP) and serves as template for transcription and replication. The RNP needs to be localized in the host nucleus to start an infectious cycle, but is too large to diffuse through the nuclear pore complex. NP comprises at least 2 nuclear localization signals that are responsible for the active RNP import into the nucleus through cellular importin alpha/beta pathway. Later in the infection, nclear export of RNPs are mediated through viral proteins NEP interacting with M1 which binds nucleoproteins. It is possible that nucleoprotein binds directly host exportin-1/XPO1 and plays an active role in RNPs nuclear export. M1 interaction with RNP seems to hide nucleoprotein's nuclear localization signals. Soon after a virion infects a new cell, M1 dissociates from the RNP under acidification of the virion driven by M2 protein. Dissociation of M1 from RNP unmasks nucleoprotein's nuclear localization signals, targeting the RNP to the nucleus. The chain is Nucleoprotein from Influenza A virus (strain A/Turkey/Wisconsin/1/1966 H9N2).